The following is a 167-amino-acid chain: V-type proton ATPase subunit c' (167 aa).

The Lumenal segment spans residues 1–13; the sequence is MAEIMADSELAPK. The chain crosses the membrane as a helical span at residues 14–34; it reads FAPFIGMAGIAAAMIFGSAGA. The Cytoplasmic segment spans residues 35 to 59; the sequence is AYGTAKSGIGIAGVGTFRPDLIMKC. A helical transmembrane segment spans residues 60-80; that stretch reads LIPVVMSGIIAVYALVVAVLI. Topologically, residues 81 to 101 are lumenal; it reads AQDLGPPGSGQHYSLFNGFMH. A helical transmembrane segment spans residues 102–122; sequence LACGLSVGLTGLAAGYCIGIV. The Cytoplasmic segment spans residues 123 to 140; that stretch reads GDKGVRSFMLQSRIFVGM. A helical membrane pass occupies residues 141–161; it reads VLILIFGEVLGLYGLIVALIL. Residues 162-167 lie on the Lumenal side of the membrane; that stretch reads NTKSKG.

It belongs to the V-ATPase proteolipid subunit family. As to quaternary structure, V-ATPase is a heteromultimeric enzyme composed of a peripheral catalytic V1 complex (components A to H) attached to an integral membrane V0 proton pore complex (components: a, c, c', c'', d, e, f and VOA1). The decameric c-ring forms the proton-conducting pore, and is composed of eight proteolipid subunits c, one subunit c' and one subunit c''.

It is found in the vacuole membrane. Proton-conducting pore forming subunit of the V0 complex of vacuolar(H+)-ATPase (V-ATPase), a multisubunit enzyme composed of a peripheral complex (V1) that hydrolyzes ATP and a membrane integral complex (V0) that translocates protons. V-ATPase is responsible for acidifying and maintaining the pH of intracellular compartments. The chain is V-type proton ATPase subunit c' (vma-11) from Neurospora crassa (strain ATCC 24698 / 74-OR23-1A / CBS 708.71 / DSM 1257 / FGSC 987).